The primary structure comprises 135 residues: Aspartate 1-decarboxylase (135 aa).

Serine 25 functions as the Schiff-base intermediate with substrate; via pyruvic acid in the catalytic mechanism. Serine 25 bears the Pyruvic acid (Ser) mark. Substrate is bound at residue threonine 57. The active-site Proton donor is tyrosine 58. 73–75 is a binding site for substrate; sequence GSA.

It belongs to the PanD family. Heterooctamer of four alpha and four beta subunits. The cofactor is pyruvate. Post-translationally, is synthesized initially as an inactive proenzyme, which is activated by self-cleavage at a specific serine bond to produce a beta-subunit with a hydroxyl group at its C-terminus and an alpha-subunit with a pyruvoyl group at its N-terminus.

It is found in the cytoplasm. The enzyme catalyses L-aspartate + H(+) = beta-alanine + CO2. It functions in the pathway cofactor biosynthesis; (R)-pantothenate biosynthesis; beta-alanine from L-aspartate: step 1/1. In terms of biological role, catalyzes the pyruvoyl-dependent decarboxylation of aspartate to produce beta-alanine. This chain is Aspartate 1-decarboxylase, found in Albidiferax ferrireducens (strain ATCC BAA-621 / DSM 15236 / T118) (Rhodoferax ferrireducens).